The chain runs to 404 residues: MCSSLCALLLVILAVHNVHAKSDPELHMTTPQIIERWGYPAMIYSVTTDDGYILELHRIPHGKTNVTWPNGKQPVVFMQHGLLCASTDWTMNLPEQSAAFIFADAGFDVWLGNMRGNTYSMKHKNLKASHSDFWEWSWDEMATYDLPAMIDKVLEVTGQESLYYMGHSQGTLTMFSHLSKDDGIFAKKIKKFFALAPVGSVKDIKGFLSFFAHYFSLEFDGWFDVFGAGEFLPNNWAMKLAAKDICGGLKIESDLCDNVCFLIAGPESDQWNSTRVPVYASHDPAGTATQNIVHWIQMVRHGGVPAYDWGSKENKKKYGQANPPEYDFTAIKGTQIYLYWSDADWLADKTDITNYLLTRLNPAIIAQNNYFTDYNHFDFVFGLRAPNDIYLPIVDICTKDYNGK.

An N-terminal signal peptide occupies residues 1–20 (MCSSLCALLLVILAVHNVHA). N-linked (GlcNAc...) asparagine glycosylation is present at N65. The active-site Nucleophile is S168. N272 is a glycosylation site (N-linked (GlcNAc...) asparagine). Catalysis depends on charge relay system residues D344 and H376.

This sequence belongs to the AB hydrolase superfamily. Lipase family.

The protein resides in the secreted. It localises to the lysosome lumen. Lipase that, together with lipl-1, plays a role in the response to nutrient deprivation by controlling lipid metabolism. Specifically, involved in the breakdown of lipids during lipophagy, a process during which lipids contained in lipid droplets that have been delivered to lysosomes by autophagy are degraded. This Caenorhabditis elegans protein is Lipase lipl-3.